The following is a 322-amino-acid chain: Undecaprenyl-phosphate 4-deoxy-4-formamido-L-arabinose transferase (322 aa).

At methionine 1 to methionine 235 the chain is on the cytoplasmic side. The helical transmembrane segment at leucine 236–isoleucine 256 threads the bilayer. The Periplasmic portion of the chain corresponds to leucine 257–glycine 269. Residues valine 270 to leucine 290 form a helical membrane-spanning segment. Residues leucine 291 to glutamate 322 are Cytoplasmic-facing.

Belongs to the glycosyltransferase 2 family.

Its subcellular location is the cell inner membrane. It carries out the reaction UDP-4-deoxy-4-formamido-beta-L-arabinose + di-trans,octa-cis-undecaprenyl phosphate = 4-deoxy-4-formamido-alpha-L-arabinopyranosyl di-trans,octa-cis-undecaprenyl phosphate + UDP. It participates in glycolipid biosynthesis; 4-amino-4-deoxy-alpha-L-arabinose undecaprenyl phosphate biosynthesis; 4-amino-4-deoxy-alpha-L-arabinose undecaprenyl phosphate from UDP-4-deoxy-4-formamido-beta-L-arabinose and undecaprenyl phosphate: step 1/2. Its pathway is bacterial outer membrane biogenesis; lipopolysaccharide biosynthesis. In terms of biological role, catalyzes the transfer of 4-deoxy-4-formamido-L-arabinose from UDP to undecaprenyl phosphate. The modified arabinose is attached to lipid A and is required for resistance to polymyxin and cationic antimicrobial peptides. The protein is Undecaprenyl-phosphate 4-deoxy-4-formamido-L-arabinose transferase of Shigella flexneri.